We begin with the raw amino-acid sequence, 964 residues long: Chaperone protein ClpB4, mitochondrial (964 aa).

Residues 1 to 39 (MALRRLSKSVSSAIKAQYTLSRPSPLLRSRSLSSSPHYT) constitute a mitochondrion transit peptide. A Clp R domain is found at 83–227 (VNQNEFTEMA…KDAIKDVRGD (145 aa)). Repeat stretches follow at residues 88-153 (FTEM…ISKQ) and 164-227 (LGSS…VRGD). Residues 242–490 (LEKYGNDLTE…KLKMEITSKP (249 aa)) form an i region. ATP contacts are provided by residues 287 to 294 (GEPGVGKT) and 690 to 697 (GPTGVGKT). Residues 616–807 (VTDLDIAEIV…VVIMTSNIGS (192 aa)) are II.

This sequence belongs to the ClpA/ClpB family.

It is found in the mitochondrion. Functionally, molecular chaperone that does not seem to be involved in heat stress response or tolerance. The chain is Chaperone protein ClpB4, mitochondrial (CLPB4) from Arabidopsis thaliana (Mouse-ear cress).